We begin with the raw amino-acid sequence, 287 residues long: L-cysteine S-thiosulfotransferase subunit SoxA (287 aa).

The N-terminal stretch at 1–26 (MKTMTGRLVAAALVCGGAFSGAAVSA) is a signal peptide. Positions 74–168 (DDFENSGMVF…AMVALIASVS (95 aa)) constitute a Cytochrome c domain. Residues C102, C105, H106, C140, C203, C206, and H207 each contribute to the heme c site. Residue R244 coordinates substrate. C248 serves as a coordination point for heme c. The active-site Cysteine persulfide intermediate is C248.

It belongs to the SoxA family. In terms of assembly, heterodimer of SoxA and SoxX. The cofactor is heme c. Cysteine persulfide at Cys-248.

It is found in the periplasm. The enzyme catalyses L-cysteinyl-[SoxY protein] + thiosulfate + 2 Fe(III)-[cytochrome c] = S-sulfosulfanyl-L-cysteinyl-[SoxY protein] + 2 Fe(II)-[cytochrome c] + 2 H(+). It catalyses the reaction S-sulfanyl-L-cysteinyl-[SoxY protein] + thiosulfate + 2 Fe(III)-[cytochrome c] = S-(2-sulfodisulfanyl)-L-cysteinyl-[SoxY protein] + 2 Fe(II)-[cytochrome c] + 2 H(+). In terms of biological role, C-type diheme cytochrome, which is part of the SoxAX cytochrome complex involved in sulfur oxidation. The SoxAX complex catalyzes the formation of a heterodisulfide bond between the conserved cysteine residue on a sulfur carrier SoxYZ complex subunit SoxY and thiosulfate or other inorganic sulfur substrates. This leads to the liberation of two electrons, which may be transferred from the SoxAX complex to another cytochrome c and which then may be used for reductive CO(2) fixation. The protein is L-cysteine S-thiosulfotransferase subunit SoxA of Rhodovulum sulfidophilum (Rhodobacter sulfidophilus).